The primary structure comprises 243 residues: 3,4-dihydroxyphthalate decarboxylase (243 aa).

The active-site Proton donor/acceptor is E86. Positions 86, 105, 107, and 173 each coordinate a divalent metal cation.

The protein belongs to the aldolase class II family. The cofactor is a divalent metal cation.

The catalysed reaction is 3,4-dihydroxyphthalate + H(+) = 3,4-dihydroxybenzoate + CO2. Its pathway is xenobiotic degradation; phthalate degradation. Catalyzes the decarboxylation of 3,4-dihydroxyphthalate to protocatechuate (3,4-dihydroxybenzoate) during phthalate metabolism. This Rhodococcus jostii (strain RHA1) protein is 3,4-dihydroxyphthalate decarboxylase.